The chain runs to 187 residues: Imidazoleglycerol-phosphate dehydratase (187 aa).

This sequence belongs to the imidazoleglycerol-phosphate dehydratase family.

Its subcellular location is the cytoplasm. The enzyme catalyses D-erythro-1-(imidazol-4-yl)glycerol 3-phosphate = 3-(imidazol-4-yl)-2-oxopropyl phosphate + H2O. Its pathway is amino-acid biosynthesis; L-histidine biosynthesis; L-histidine from 5-phospho-alpha-D-ribose 1-diphosphate: step 6/9. The chain is Imidazoleglycerol-phosphate dehydratase from Pyrobaculum calidifontis (strain DSM 21063 / JCM 11548 / VA1).